The following is a 180-amino-acid chain: MSRKKKSRNPGASGAPEFVVTRNRTESDVEGRLRKRAKKRKGLKTGSRNSDAEEQKRQAAAQKRDPRLGSKKKIPLIVEPVKKQTKQERRLSAEQELEMLENDAQLNVLLDRIEAGENLGTGLQKYVDEKLDRIEKLMDQLGLLEPEEDEDFTAPAVKGSRNDDDLLADFDDINFDDYKG.

2 disordered regions span residues 1–90 (MSRK…QERR) and 145–180 (EPEE…DYKG). Positions 23-32 (NRTESDVEGR) are enriched in basic and acidic residues. A compositionally biased stretch (basic residues) spans 33–43 (LRKRAKKRKGL). 2 stretches are compositionally biased toward basic and acidic residues: residues 50–68 (SDAE…DPRL) and 80–90 (PVKKQTKQERR). The segment covering 165–180 (DLLADFDDINFDDYKG) has biased composition (acidic residues).

This sequence belongs to the YihI family. Interacts with Der.

Its function is as follows. A GTPase-activating protein (GAP) that modifies Der/EngA GTPase function. May play a role in ribosome biogenesis. The protein is Der GTPase-activating protein YihI of Vibrio campbellii (strain ATCC BAA-1116).